A 205-amino-acid polypeptide reads, in one-letter code: Cytochrome c biogenesis ATP-binding export protein CcmA (205 aa).

The ABC transporter domain maps to 2 to 204; that stretch reads LEVSNLTAIR…SPKLRKIKLG (203 aa). Residue 34-41 coordinates ATP; that stretch reads GRNGTGKT.

The protein belongs to the ABC transporter superfamily. CcmA exporter (TC 3.A.1.107) family. The complex is composed of two ATP-binding proteins (CcmA) and two transmembrane proteins (CcmB).

The protein localises to the cell inner membrane. It catalyses the reaction heme b(in) + ATP + H2O = heme b(out) + ADP + phosphate + H(+). In terms of biological role, part of the ABC transporter complex CcmAB involved in the biogenesis of c-type cytochromes; once thought to export heme, this seems not to be the case, but its exact role is uncertain. Responsible for energy coupling to the transport system. The chain is Cytochrome c biogenesis ATP-binding export protein CcmA from Vibrio vulnificus (strain CMCP6).